A 323-amino-acid polypeptide reads, in one-letter code: Syntaxin-42 (323 aa).

At M1–A302 the chain is on the cytoplasmic side. The t-SNARE coiled-coil homology domain occupies Q227–A289. The chain crosses the membrane as a helical; Anchor for type IV membrane protein span at residues T303–F323.

It belongs to the syntaxin family. In terms of assembly, interacts with VTI12 and SYP61 to form a t-SNARE complex and with VPS45. In terms of tissue distribution, expressed at low levels in roots, stems, flowers and leaves.

Its subcellular location is the golgi apparatus. The protein resides in the trans-Golgi network membrane. Functionally, contributes to the regulation of secretory and vacuolar transport pathways in the post-Golgi network, and to the maintenance of the Golgi apparatus and trans-Golgi network (TGN) morphologies. Vesicle trafficking protein that functions in the secretory pathway and mediates liposome fusion. Required for extracellular resistance responses to a fungal pathogen. Also involved in the protection of chloroplasts from salicylic acid-dependent biotic stress. The sequence is that of Syntaxin-42 from Arabidopsis thaliana (Mouse-ear cress).